The sequence spans 446 residues: C-type lectin domain family 18 member C (446 aa).

An N-terminal signal peptide occupies residues methionine 1 to alanine 26. Residues leucine 52–tyrosine 182 form the SCP domain. N-linked (GlcNAc...) asparagine glycosylation is present at asparagine 144. Residues proline 228–glutamine 261 enclose the EGF-like domain. 4 cysteine pairs are disulfide-bonded: cysteine 236–cysteine 249, cysteine 251–cysteine 260, cysteine 327–cysteine 432, and cysteine 408–cysteine 424. Residues isoleucine 306–glutamine 433 enclose the C-type lectin domain.

As to expression, detected in peripheral blood cells.

The protein localises to the secreted. Its subcellular location is the endoplasmic reticulum. The protein resides in the golgi apparatus. It localises to the endosome. In terms of biological role, binds polysaccharidesin a Ca(2+)-independent manner with a preferentially binding to fucoidan, beta-glucans and galactans. This is C-type lectin domain family 18 member C (CLEC18C) from Homo sapiens (Human).